A 156-amino-acid polypeptide reads, in one-letter code: Small ribosomal subunit protein uS7 (156 aa).

This sequence belongs to the universal ribosomal protein uS7 family. In terms of assembly, part of the 30S ribosomal subunit. Contacts proteins S9 and S11.

In terms of biological role, one of the primary rRNA binding proteins, it binds directly to 16S rRNA where it nucleates assembly of the head domain of the 30S subunit. Is located at the subunit interface close to the decoding center, probably blocks exit of the E-site tRNA. The polypeptide is Small ribosomal subunit protein uS7 (Mycolicibacterium smegmatis (strain ATCC 700084 / mc(2)155) (Mycobacterium smegmatis)).